A 436-amino-acid chain; its full sequence is Xylose isomerase (436 aa).

Residues His-100 and Asp-103 contribute to the active site. Mg(2+) contacts are provided by Glu-231, Glu-267, His-270, Asp-295, Asp-306, Asp-308, and Asp-338.

It belongs to the xylose isomerase family. In terms of assembly, homotetramer. Requires Mg(2+) as cofactor.

It is found in the cytoplasm. It catalyses the reaction alpha-D-xylose = alpha-D-xylulofuranose. The protein is Xylose isomerase of Rhizobium etli (strain CIAT 652).